Consider the following 218-residue polypeptide: Glutathione S-transferase U24 (218 aa).

The region spanning 3–82 (DEVILLDFWA…YIDETWPDNN (80 aa)) is the GST N-terminal domain. Residues 13–14 (SM), 39–40 (NK), 53–54 (KI), and 66–67 (ES) each bind glutathione. The GST C-terminal domain occupies 88 to 215 (DPYKRAHAKF…TFISERRKKL (128 aa)). A Phosphothreonine modification is found at Thr-148.

Belongs to the GST superfamily. Tau family.

It localises to the cytoplasm. It is found in the cytosol. It catalyses the reaction RX + glutathione = an S-substituted glutathione + a halide anion + H(+). Its function is as follows. May be involved in the conjugation of reduced glutathione to a wide number of exogenous and endogenous hydrophobic electrophiles and have a detoxification role against certain herbicides. The chain is Glutathione S-transferase U24 (GSTU24) from Arabidopsis thaliana (Mouse-ear cress).